Reading from the N-terminus, the 510-residue chain is NAD(P)H-quinone oxidoreductase subunit 2, chloroplastic (510 aa).

The next 11 helical transmembrane spans lie at 24-44 (LLLF…GLIL), 59-79 (WFYF…LFRW), 99-119 (IFQF…VEYI), 124-144 (MAIT…MFLC), 149-169 (LITI…LSGY), 183-203 (YLLM…WLYG), 295-315 (WHLL…LIAI), 323-343 (MLAY…IVGD), 347-367 (GYAS…GTFA), 395-415 (ALSS…AGFF), and 418-438 (LHLF…IGLL).

The protein belongs to the complex I subunit 2 family. In terms of assembly, NDH is composed of at least 16 different subunits, 5 of which are encoded in the nucleus.

It localises to the plastid. The protein localises to the chloroplast thylakoid membrane. The enzyme catalyses a plastoquinone + NADH + (n+1) H(+)(in) = a plastoquinol + NAD(+) + n H(+)(out). The catalysed reaction is a plastoquinone + NADPH + (n+1) H(+)(in) = a plastoquinol + NADP(+) + n H(+)(out). Functionally, NDH shuttles electrons from NAD(P)H:plastoquinone, via FMN and iron-sulfur (Fe-S) centers, to quinones in the photosynthetic chain and possibly in a chloroplast respiratory chain. The immediate electron acceptor for the enzyme in this species is believed to be plastoquinone. Couples the redox reaction to proton translocation, and thus conserves the redox energy in a proton gradient. The chain is NAD(P)H-quinone oxidoreductase subunit 2, chloroplastic from Maianthemum racemosum (False Solomon's-seal).